The following is a 442-amino-acid chain: F-box protein KIB2 (442 aa).

One can recognise an F-box domain in the interval 62–109 (SKQPVLVLDLLRSILERLSFVDFHRGRCISLEWYSASESCLAVKNPTS). Residues 236 to 243 (HKKGDENY) carry the Nuclear localization signal motif.

In terms of assembly, interacts with ASK7/BIN2/SK21.

Its subcellular location is the cytoplasm. It localises to the nucleus. It is found in the nucleolus. Component of SCF(ASK-cullin-F-box) E3 ubiquitin ligase complexes, which may mediate the ubiquitination and subsequent proteasomal degradation of target proteins. Required for brassinosteroid (BR) signal transduction. Mediates ASK7/BIN2/SK21 inactivation both by competing with substrate binding (e.g. BZR1) and by promoting its ubiquitination and subsequent proteasomal degradation. In Arabidopsis thaliana (Mouse-ear cress), this protein is F-box protein KIB2.